Consider the following 389-residue polypeptide: MSCFLGPSTNNKSRENEGSSMAAPYEQQNLPRNDRRQITTWEAVGTNKESPKNIKAKSFKFRELATATNSFRQEFLIGEGGFGRVYKGKMEKTGQVVAVKQLDRNGLQGNREFLVEIFRLSLLHHPNLANLIGYCLDGDQRLLVHEFMPLGSLEDHLLDVVVGQQPLDWNSRIRIALGAAKGLEYLHEKANPPVIYRDFKSSNILLNVDFDAKLSDFGLAKLGSVGDTQNVSSRVVGTYGYCAPEYHKTGQLTVKSDVYSFGVVLLELITGKRVIDTTRPCHEQNLVTWAQPIFREPNRFPELADPLLQGEFPEKSLNQAVAIAAMCLQEEPIVRPLISDVVTALSFMSTETGSPSGLTGTALNPLSPKTVEDQGWLQCESPRDVYSLL.

The interval 1–36 (MSCFLGPSTNNKSRENEGSSMAAPYEQQNLPRNDRR) is disordered. Cys3 is lipidated: S-palmitoyl cysteine. A Protein kinase domain is found at 71-348 (FRQEFLIGEG…SDVVTALSFM (278 aa)). Residues 77-85 (IGEGGFGRV) and Lys100 contribute to the ATP site. Residue Asp198 is the Proton acceptor of the active site. Ser202 and Ser232 each carry phosphoserine. Phosphothreonine is present on Thr238. At Tyr246 the chain carries Phosphotyrosine.

The protein belongs to the protein kinase superfamily. Ser/Thr protein kinase family.

It localises to the cell membrane. It catalyses the reaction L-seryl-[protein] + ATP = O-phospho-L-seryl-[protein] + ADP + H(+). It carries out the reaction L-threonyl-[protein] + ATP = O-phospho-L-threonyl-[protein] + ADP + H(+). May be involved in plant defense signaling. This chain is Probable serine/threonine-protein kinase PBL24, found in Arabidopsis thaliana (Mouse-ear cress).